We begin with the raw amino-acid sequence, 331 residues long: Hyaluronidase A (331 aa).

2 disulfide bridges follow: Cys-19–Cys-308 and Cys-185–Cys-197. 2 N-linked (GlcNAc...) asparagine glycosylation sites follow: Asn-79 and Asn-99. Glu-109 functions as the Proton donor in the catalytic mechanism. Asn-127 is a glycosylation site (N-linked (GlcNAc...) asparagine). Residue Asn-325 is glycosylated (N-linked (GlcNAc...) asparagine).

This sequence belongs to the glycosyl hydrolase 56 family. Expressed by the venom gland.

It is found in the secreted. The enzyme catalyses Random hydrolysis of (1-&gt;4)-linkages between N-acetyl-beta-D-glucosamine and D-glucuronate residues in hyaluronate.. Its function is as follows. Hydrolyzes high molecular weight hyaluronic acid to produce small oligosaccharides. The polypeptide is Hyaluronidase A (Vespula vulgaris (Yellow jacket)).